A 347-amino-acid polypeptide reads, in one-letter code: Protein POOR HOMOLOGOUS SYNAPSIS 1 (347 aa).

Its subcellular location is the cytoplasm. In terms of biological role, required for accurate chromosome segregation in meiosis. Required for pairing to occur between homologous chromosomes. Acts in early recombination steps and ensures pairing fidelity and proper repair of meiotic DNA double-strand-breaks. Regulates recombination and pairing of homologous chromosomes during meiotic prophase by controlling transport of RAD50 from cytoplasm to the nucleus. May affect pairing of the gene-rich fraction of the genome rather than preventing pairing between repetitive DNA elements. This chain is Protein POOR HOMOLOGOUS SYNAPSIS 1, found in Zea mays (Maize).